The following is a 353-amino-acid chain: UPF0283 membrane protein YpsIP31758_1791 (353 aa).

3 consecutive transmembrane segments (helical) span residues 71-91 (MVTA…VQWV), 101-121 (IALG…GSVV), and 214-234 (ESAL…FIAW).

This sequence belongs to the UPF0283 family.

It is found in the cell inner membrane. This chain is UPF0283 membrane protein YpsIP31758_1791, found in Yersinia pseudotuberculosis serotype O:1b (strain IP 31758).